A 199-amino-acid polypeptide reads, in one-letter code: Small ribosomal subunit protein uS4 (199 aa).

The S4 RNA-binding domain maps to 91-154 (SRLDNLVYRM…RGLQLIKDAL (64 aa)).

It belongs to the universal ribosomal protein uS4 family. As to quaternary structure, part of the 30S ribosomal subunit. Contacts protein S5. The interaction surface between S4 and S5 is involved in control of translational fidelity.

In terms of biological role, one of the primary rRNA binding proteins, it binds directly to 16S rRNA where it nucleates assembly of the body of the 30S subunit. Its function is as follows. With S5 and S12 plays an important role in translational accuracy. This is Small ribosomal subunit protein uS4 from Brevibacillus brevis (strain 47 / JCM 6285 / NBRC 100599).